Here is a 367-residue protein sequence, read N- to C-terminus: Glutamate 5-kinase (367 aa).

ATP is bound at residue K10. 3 residues coordinate substrate: S50, D137, and N149. Position 169–170 (169–170) interacts with ATP; that stretch reads TD. Residues 275 to 353 enclose the PUA domain; it reads AGEITVDEGA…QQIDAILGYE (79 aa).

The protein belongs to the glutamate 5-kinase family.

The protein resides in the cytoplasm. The enzyme catalyses L-glutamate + ATP = L-glutamyl 5-phosphate + ADP. The protein operates within amino-acid biosynthesis; L-proline biosynthesis; L-glutamate 5-semialdehyde from L-glutamate: step 1/2. In terms of biological role, catalyzes the transfer of a phosphate group to glutamate to form L-glutamate 5-phosphate. The sequence is that of Glutamate 5-kinase from Salmonella paratyphi B (strain ATCC BAA-1250 / SPB7).